The chain runs to 247 residues: UPF0309 protein Teth39_1980 (247 aa).

The 183-residue stretch at 31-213 (IANSLLKEED…EAEIVFIMIK (183 aa)) folds into the SIS domain.

This sequence belongs to the UPF0309 family.

The sequence is that of UPF0309 protein Teth39_1980 from Thermoanaerobacter pseudethanolicus (strain ATCC 33223 / 39E) (Clostridium thermohydrosulfuricum).